The primary structure comprises 368 residues: H-2 class I histocompatibility antigen, K-W28 alpha chain (368 aa).

The N-terminal stretch at 1–21 (MAPCMLLLLLAAALAPTQTRA) is a signal peptide. An alpha-1 region spans residues 22 to 111 (GPHSLRYFHT…LLRYYNQSAG (90 aa)). Residues 22–305 (GPHSLRYFHT…EPPPSAVSNT (284 aa)) lie on the Extracellular side of the membrane. Asn-107 carries N-linked (GlcNAc...) asparagine glycosylation. The segment at 112-203 (GSHTIQRMYG…KNGNATLLRT (92 aa)) is alpha-2. A disulfide bond links Cys-122 and Cys-185. Asn-197 is a glycosylation site (N-linked (GlcNAc...) asparagine). The alpha-3 stretch occupies residues 204-295 (DSPKAHVTHH…GLPKPLTLRW (92 aa)). The 87-residue stretch at 206 to 292 (PKAHVTHHSR…YHQGLPKPLT (87 aa)) folds into the Ig-like C1-type domain. Cys-224 and Cys-280 are disulfide-bonded. The segment at 296–305 (EPPPSAVSNT) is connecting peptide. Residues 306-329 (VIIAVLVVLGAAIVTGAVVAFVMM) traverse the membrane as a helical segment. Residues 330–368 (RRRNTGGKGGDYALAPGSQTSDLSLPDCKVMVHDPHSLA) lie on the Cytoplasmic side of the membrane. 2 positions are modified to phosphoserine: Ser-350 and Ser-353.

Belongs to the MHC class I family. In terms of assembly, heterodimer of an alpha chain and a beta chain (beta-2-microglobulin).

It is found in the membrane. Its function is as follows. Involved in the presentation of foreign antigens to the immune system. This is H-2 class I histocompatibility antigen, K-W28 alpha chain (H2-K1) from Mus musculus (Mouse).